Here is a 183-residue protein sequence, read N- to C-terminus: ATP synthase subunit b, chloroplastic (183 aa).

A helical transmembrane segment spans residues 27-49; the sequence is LATNPINLSVVLGVLIFFGKGVL.

It belongs to the ATPase B chain family. F-type ATPases have 2 components, F(1) - the catalytic core - and F(0) - the membrane proton channel. F(1) has five subunits: alpha(3), beta(3), gamma(1), delta(1), epsilon(1). F(0) has four main subunits: a(1), b(1), b'(1) and c(10-14). The alpha and beta chains form an alternating ring which encloses part of the gamma chain. F(1) is attached to F(0) by a central stalk formed by the gamma and epsilon chains, while a peripheral stalk is formed by the delta, b and b' chains.

The protein resides in the plastid. Its subcellular location is the chloroplast thylakoid membrane. Its function is as follows. F(1)F(0) ATP synthase produces ATP from ADP in the presence of a proton or sodium gradient. F-type ATPases consist of two structural domains, F(1) containing the extramembraneous catalytic core and F(0) containing the membrane proton channel, linked together by a central stalk and a peripheral stalk. During catalysis, ATP synthesis in the catalytic domain of F(1) is coupled via a rotary mechanism of the central stalk subunits to proton translocation. In terms of biological role, component of the F(0) channel, it forms part of the peripheral stalk, linking F(1) to F(0). The protein is ATP synthase subunit b, chloroplastic of Ranunculus macranthus (Large buttercup).